The primary structure comprises 422 residues: Lactose-binding protein (422 aa).

Residues 1–28 form the signal peptide; the sequence is MDYSRLLKRSVSAALTAAALLCSTAAFA. Residues 246–277 are lactose-binding; that stretch reads SNDGIRALTSGDVASVLRGVWITGTVKSQPDQ.

It belongs to the bacterial solute-binding protein 1 family.

It is found in the periplasm. Its function is as follows. Part of the binding-protein-dependent transport system for lactose. The protein is Lactose-binding protein (lacE) of Rhizobium radiobacter (Agrobacterium tumefaciens).